The primary structure comprises 340 residues: HTH-type transcriptional regulator VirS (340 aa).

Residues 236–334 (ERVVGLARRL…GMTPRQYRAY (99 aa)) form the HTH araC/xylS-type domain. 2 consecutive DNA-binding regions (H-T-H motif) follow at residues 254 to 275 (EAIA…AAEG) and 301 to 324 (LSQI…RRWF).

Phosphorylated by PknK. Phosphorylation increases affinity for the mymA promoter.

Regulates the expression of the mymA operon. In Mycobacterium tuberculosis (strain CDC 1551 / Oshkosh), this protein is HTH-type transcriptional regulator VirS (virS).